A 287-amino-acid chain; its full sequence is 23S rRNA (uridine(2479)-2'-O)-methyltransferase (287 aa).

Residues 210–211, Gly232, and 252–254 each bind S-adenosyl-L-methionine; these read TD and IPM.

The protein belongs to the class IV-like SAM-binding methyltransferase superfamily. RNA methyltransferase TsnR/AvirB family. In terms of assembly, homodimer.

The enzyme catalyses uridine(2479) in 23S rRNA + S-adenosyl-L-methionine = 2'-O-methyluridine(2479) in 23S rRNA + S-adenosyl-L-homocysteine + H(+). Its function is as follows. Specifically methylates the 2'-O-ribose position of uridine-2479 in 23S ribosomal RNA. Confers resistance to antibiotic avilamycin, an orthosomycin antibiotic. This chain is 23S rRNA (uridine(2479)-2'-O)-methyltransferase (aviRb), found in Streptomyces viridochromogenes.